We begin with the raw amino-acid sequence, 416 residues long: Iron-regulated transcriptional activator AFT2 (416 aa).

Asp-53 is a binding site for Zn(2+). Residues Arg-54, His-55, Lys-58, Ile-74, Glu-75, Arg-76, Ser-77, Asp-78, and Lys-81 each coordinate DNA. His-55 lines the Zn(2+) pocket. Cys-86 serves as a coordination point for Zn(2+). Ser-88 provides a ligand contact to DNA. A Zn(2+)-binding site is contributed by Cys-109. DNA is bound by residues Val-119 and Arg-120. Zn(2+) contacts are provided by His-133 and His-135. The DNA site is built by Gln-157 and Asn-159. Positions 187 to 189 (CDC) match the CDC [2Fe-2S] cluster binding motif motif.

In terms of assembly, homodimer. Dimerization decreases the DNA-binding activity.

Its subcellular location is the nucleus. Its activity is regulated as follows. Dimerization via the binding of Fe(2+) or a [2Fe-2S] cluster decreases the DNA-binding activity. Functionally, transcription factor required for iron homeostasis and resistance to oxidative stress. With AFT1, activates the gene expression in response to low-iron conditions, also called iron regulon. Recognizes the consensus iron-responsive element (Fe-RE) sequence 5'-CACCC-3' in the promoters of target genes. The transcription activation by AFT1 and AFT2 depends on the mitochondrial iron-sulfur protein biosynthesis pathway. In high iron condition, the presence of iron leads to dimerization, which in turn leads to a decrease in DNA affinity. This Saccharomyces cerevisiae (strain ATCC 204508 / S288c) (Baker's yeast) protein is Iron-regulated transcriptional activator AFT2.